A 387-amino-acid polypeptide reads, in one-letter code: Queuine tRNA-ribosyltransferase (387 aa).

The active-site Proton acceptor is the Asp105. Substrate contacts are provided by residues 105 to 109, Asp177, and Gly248; that span reads DSGGF. The tract at residues 278–284 is RNA binding; the sequence is GIGDLPS. The active-site Nucleophile is the Asp297. Residues 302-306 form an RNA binding; important for wobble base 34 recognition region; that stretch reads TRAAR. Positions 335, 337, 340, and 366 each coordinate Zn(2+).

Belongs to the queuine tRNA-ribosyltransferase family. In terms of assembly, homodimer. Within each dimer, one monomer is responsible for RNA recognition and catalysis, while the other monomer binds to the replacement base PreQ1. It depends on Zn(2+) as a cofactor.

The enzyme catalyses 7-aminomethyl-7-carbaguanine + guanosine(34) in tRNA = 7-aminomethyl-7-carbaguanosine(34) in tRNA + guanine. Its pathway is tRNA modification; tRNA-queuosine biosynthesis. Functionally, catalyzes the base-exchange of a guanine (G) residue with the queuine precursor 7-aminomethyl-7-deazaguanine (PreQ1) at position 34 (anticodon wobble position) in tRNAs with GU(N) anticodons (tRNA-Asp, -Asn, -His and -Tyr). Catalysis occurs through a double-displacement mechanism. The nucleophile active site attacks the C1' of nucleotide 34 to detach the guanine base from the RNA, forming a covalent enzyme-RNA intermediate. The proton acceptor active site deprotonates the incoming PreQ1, allowing a nucleophilic attack on the C1' of the ribose to form the product. After dissociation, two additional enzymatic reactions on the tRNA convert PreQ1 to queuine (Q), resulting in the hypermodified nucleoside queuosine (7-(((4,5-cis-dihydroxy-2-cyclopenten-1-yl)amino)methyl)-7-deazaguanosine). In Protochlamydia amoebophila (strain UWE25), this protein is Queuine tRNA-ribosyltransferase.